Reading from the N-terminus, the 159-residue chain is Ribosomal RNA large subunit methyltransferase H (159 aa).

Residues L76, G108, and 127–132 (FSKMTF) contribute to the S-adenosyl-L-methionine site.

This sequence belongs to the RNA methyltransferase RlmH family. As to quaternary structure, homodimer.

It is found in the cytoplasm. It catalyses the reaction pseudouridine(1915) in 23S rRNA + S-adenosyl-L-methionine = N(3)-methylpseudouridine(1915) in 23S rRNA + S-adenosyl-L-homocysteine + H(+). Its function is as follows. Specifically methylates the pseudouridine at position 1915 (m3Psi1915) in 23S rRNA. The polypeptide is Ribosomal RNA large subunit methyltransferase H (Bacillus velezensis (strain DSM 23117 / BGSC 10A6 / LMG 26770 / FZB42) (Bacillus amyloliquefaciens subsp. plantarum)).